The following is a 63-amino-acid chain: ATP synthase F(0) complex subunit 8 (63 aa).

A helical transmembrane segment spans residues 8-24 (TWFLTILSVMLTLFTLL). Lys57 carries the N6-acetyllysine modification.

This sequence belongs to the ATPase protein 8 family. As to quaternary structure, component of the ATP synthase complex composed at least of ATP5F1A/subunit alpha, ATP5F1B/subunit beta, ATP5MC1/subunit c (homooctomer), MT-ATP6/subunit a, MT-ATP8/subunit 8, ATP5ME/subunit e, ATP5MF/subunit f, ATP5MG/subunit g, ATP5MK/subunit k, ATP5MJ/subunit j, ATP5F1C/subunit gamma, ATP5F1D/subunit delta, ATP5F1E/subunit epsilon, ATP5PF/subunit F6, ATP5PB/subunit b, ATP5PD/subunit d, ATP5PO/subunit OSCP. ATP synthase complex consists of a soluble F(1) head domain (subunits alpha(3) and beta(3)) - the catalytic core - and a membrane F(0) domain - the membrane proton channel (subunits c, a, 8, e, f, g, k and j). These two domains are linked by a central stalk (subunits gamma, delta, and epsilon) rotating inside the F1 region and a stationary peripheral stalk (subunits F6, b, d, and OSCP). Interacts with PRICKLE3.

The protein localises to the mitochondrion membrane. In terms of biological role, subunit 8, of the mitochondrial membrane ATP synthase complex (F(1)F(0) ATP synthase or Complex V) that produces ATP from ADP in the presence of a proton gradient across the membrane which is generated by electron transport complexes of the respiratory chain. ATP synthase complex consist of a soluble F(1) head domain - the catalytic core - and a membrane F(1) domain - the membrane proton channel. These two domains are linked by a central stalk rotating inside the F(1) region and a stationary peripheral stalk. During catalysis, ATP synthesis in the catalytic domain of F(1) is coupled via a rotary mechanism of the central stalk subunits to proton translocation. In vivo, can only synthesize ATP although its ATP hydrolase activity can be activated artificially in vitro. Part of the complex F(0) domain. The chain is ATP synthase F(0) complex subunit 8 from Physeter macrocephalus (Sperm whale).